The chain runs to 330 residues: Aspartate--ammonia ligase (330 aa).

It belongs to the class-II aminoacyl-tRNA synthetase family. AsnA subfamily.

It is found in the cytoplasm. The enzyme catalyses L-aspartate + NH4(+) + ATP = L-asparagine + AMP + diphosphate + H(+). It functions in the pathway amino-acid biosynthesis; L-asparagine biosynthesis; L-asparagine from L-aspartate (ammonia route): step 1/1. The sequence is that of Aspartate--ammonia ligase from Glaesserella parasuis serovar 5 (strain SH0165) (Haemophilus parasuis).